We begin with the raw amino-acid sequence, 886 residues long: Methanogenesis regulatory histidine kinase FilI (886 aa).

2 helical membrane-spanning segments follow: residues 7-27 (ILAF…TFMC) and 270-290 (VVGI…FLEL). Residues 290 to 344 (LSILMPLATITSSVEAIREQEKGQGSRIPTVGPAELATLAESINEMLDHLESYNQ) form the HAMP domain. The PAS domain occupies 349–419 (SEKRFRTIVD…EKDAGVLSGE (71 aa)). Residues 421–473 (FVGEVSAHTRAGSSMTFHAVKVPLRDDRGQVTGICGIARDITDIKEAGVELLK) form the PAC domain. In terms of domain architecture, Histidine kinase spans 674-886 (TVSHDLRSPL…TCVLFTLPTP (213 aa)). Phosphohistidine; by autocatalysis is present on His-677.

In terms of processing, autophosphorylated.

It is found in the cell membrane. The catalysed reaction is ATP + protein L-histidine = ADP + protein N-phospho-L-histidine.. Member of the two-component regulatory system FilI/FilRs, which is involved in the regulation of methanogenesis. Autophosphorylates and specifically transfers the phosphoryl group to both FilR1 and FilR2. In terms of biological role, could also catalyze the synthesis of the quorum sensing (QS) signal molecules carboxyl-acyl homoserine lactones (AHLs), which regulate the transition of the cellular morphology from short cells to filaments and of the carbon metabolic flux from biomass formation to methane production. The sequence is that of Methanogenesis regulatory histidine kinase FilI from Methanothrix harundinacea (strain 6Ac) (Methanosaeta harundinacea).